A 156-amino-acid polypeptide reads, in one-letter code: 3-dehydroquinate dehydratase (156 aa).

The active-site Proton acceptor is the Tyr-22. The substrate site is built by Asn-73, His-79, and Asp-86. His-99 functions as the Proton donor in the catalytic mechanism. Substrate is bound by residues 100 to 101 (LS) and Arg-110.

This sequence belongs to the type-II 3-dehydroquinase family. As to quaternary structure, homododecamer.

The enzyme catalyses 3-dehydroquinate = 3-dehydroshikimate + H2O. It participates in metabolic intermediate biosynthesis; chorismate biosynthesis; chorismate from D-erythrose 4-phosphate and phosphoenolpyruvate: step 3/7. Catalyzes a trans-dehydration via an enolate intermediate. In Nitratiruptor sp. (strain SB155-2), this protein is 3-dehydroquinate dehydratase.